Reading from the N-terminus, the 650-residue chain is Probable ATP-dependent RNA helicase DDX17 (650 aa).

The interval 1–38 (MRGGGFGDRDRDRDRGGFGARGGSGLPPKKFGNPGERL) is disordered. Residues 7–16 (GDRDRDRDRG) show a composition bias toward basic and acidic residues. N6-acetyllysine occurs at positions 29, 30, and 42. Lys50 is covalently cross-linked (Glycyl lysine isopeptide (Lys-Gly) (interchain with G-Cter in SUMO); alternate). A Glycyl lysine isopeptide (Lys-Gly) (interchain with G-Cter in SUMO1); alternate cross-link involves residue Lys50. Residue Lys50 forms a Glycyl lysine isopeptide (Lys-Gly) (interchain with G-Cter in SUMO2); alternate linkage. The Q motif motif lies at 92 to 120 (FAFHHANFPQYVMDVLMDQHFTEPTPIQC). The 176-residue stretch at 123-298 (FPLALSGRDM…EDFLRDYTQI (176 aa)) folds into the Helicase ATP-binding domain. 136-143 (AQTGSGKT) serves as a coordination point for ATP. The DEAD box motif lies at 246 to 249 (DEAD). Positions 326–473 (KLIQLMEEIM…AINPKLMQLV (148 aa)) constitute a Helicase C-terminal domain. Thr444 is subject to Phosphothreonine. Residue Lys449 forms a Glycyl lysine isopeptide (Lys-Gly) (interchain with G-Cter in SUMO2) linkage. The transactivation domain stretch occupies residues 468-650 (KLMQLVDHRG…PPPPPPPSRK (183 aa)). Disordered stretches follow at residues 472 to 543 (LVDH…YGSP) and 583 to 650 (ASST…PSRK). Polar residues predominate over residues 489–499 (RTTSSANNPNL). Residues 504–531 (ECDRRLRGVKDGGRRDSTSYRDRSETDR) are compositionally biased toward basic and acidic residues. Residues 583–609 (ASSTASAGRSSQSSSQQFSGIGRSGQQ) are compositionally biased toward low complexity. Arg605 bears the Omega-N-methylarginine mark. Polar residues predominate over residues 610–619 (PQPLMSQQFA). Pro residues predominate over residues 638 to 650 (YPPPPPPPPPSRK). Residues 639–647 (PPPPPPPPP) form an interaction with YAP1 region.

The protein belongs to the DEAD box helicase family. DDX5/DBP2 subfamily. As to quaternary structure, interacts with DDX5 in an RNA-independent manner. Interacts with CDK9 transcription elongation complex under basal conditions. Following cell stimulation with poly(I:C), a synthetic double-stranded RNA mimicking viral infection, the interaction with CDK9 is decreased. Interacts with ESR1 in an estrogen-independent manner. Interacts with HNRNPH1; this interaction is important for the regulation of alternative splicing on G-quadruplex structures. At high, but not low, cell density, interacts with DROSHA and DGCR8, the core components of the microprocessor complex involved in the maturation of primary microRNAs (pri-miRNAs) into pre-miRNAs. The interaction with DGCR8 is reduced during mitosis. At low, but not high, cell density, interacts with YAP1 and with its paralog, WWTR1/TAZ. Interactions with DROSHA and YAP1 are mutually exclusive. In vitro, the pre-miRNA processing activity of the DDX17-containing microprocessor complex is weaker than that of the DROSHA/DGCR8 microprocessor complex. Interacts with UPF3B. Interacts with NFAT5; this interaction leads to DDX17 recruitment to LNC2 and S100A4 promoters and NFAT5-mediated DDX17-enhanced transactivation. Interacts with HDAC1, HDAC2 and HDAC3; this interaction with HDAC1 and HDAC3, but not HDAC2, depends upon DDX17 acetylation. Interacts with ZC3HAV1 (via N-terminal domain) in an RNA-independent manner. Interacts with EXOSC3/RRP40 and EXOSC5/RRP46; this interaction may be indirect and mediated by ZC3HAV1-binding. Interacts with EP300; this interaction leads to acetylation at lysine residues. Interacts with CREBBP/CBP and KAT2B/P/CAF. Directly interacts with CTNNB1. Interacts with MYOD1. Interacts with TP53. Interacts with DCP1A in an RNA-independent manner. Interacts with DCP2 in an RNA-dependent manner. Interacts with DHX36; this interaction occurs in a RNA-dependent manner. Interacts with ERCC6. Sumoylation significantly increases stability. It also promotes interaction specifically with HDAC1 (but not HDAC2, nor HDAC3) and strongly stimulates ESR1 and TP53 coactivation. In terms of processing, acetylation at lysine residues stabilizes the protein, stimulates interaction with HDAC1 and HDAC3, but not HDAC2, and represses ESR1 and TP53 coactivation activity.

It localises to the nucleus. Its subcellular location is the nucleolus. The protein resides in the cytoplasm. It is found in the cytosol. The catalysed reaction is ATP + H2O = ADP + phosphate + H(+). In terms of biological role, as an RNA helicase, unwinds RNA and alters RNA structures through ATP binding and hydrolysis. Involved in multiple cellular processes, including pre-mRNA splicing, alternative splicing, ribosomal RNA processing and miRNA processing, as well as transcription regulation. Regulates the alternative splicing of exons exhibiting specific features. This function requires the RNA helicase activity. Affects NFAT5 and histone macro-H2A.1/MACROH2A1 alternative splicing in a CDK9-dependent manner. Affects splicing of mediators of steroid hormone signaling pathway, including kinases that phosphorylates ESR1 and transcriptional regulators. By acting splicing of regulatory factors, participates in ESR1 and AR stabilization. Promotes the inclusion of specific AC-rich alternative exons in CD44 transcripts. In myoblasts and epithelial cells, cooperates with HNRNPH1 to control the splicing of specific subsets of exons. In addition to binding mature mRNAs, also interacts with certain pri-microRNAs, including MIR132/miR-132, and stabilizes the primary transcript. Also participates in the MIR132 processing, resulting in significantly higher levels of mature MIR132 than MIR212 despite the fact that both are cotranscribed and co-regulated. Binding of pri-microRNAs may occur on the 3' segment flanking the stem loop via the 5'-[ACG]CAUC[ACU]-3' consensus sequence. Participates in MYC down-regulation at high cell density through the production of MYC-targeting microRNAs. Along with DDX5, may be involved in the processing of the 32S intermediate into the mature 28S rRNA. Promoter-specific transcription regulator, functioning as a coactivator or corepressor depending on the context of the promoter and the transcriptional complex in which it exists. Enhances NFAT5 transcriptional activity. Synergizes with TP53 in the activation of the MDM2 promoter; this activity requires acetylation on lysine residues. May also coactivate MDM2 transcription through a TP53-independent pathway. Coactivates MMP7 transcription. Along with CTNNB1, coactivates MYC, JUN, FOSL1 and cyclin D1/CCND1 transcription. Alone or in combination with DDX5 and/or SRA1 non-coding RNA, plays a critical role in promoting the assembly of proteins required for the formation of the transcription initiation complex and chromatin remodeling leading to coactivation of MYOD1-dependent transcription. This helicase-independent activity is required for skeletal muscle cells to properly differentiate into myotubes. During epithelial-to-mesenchymal transition, coregulates SMAD-dependent transcriptional activity, directly controlling key effectors of differentiation, including miRNAs which in turn directly repress its expression. Plays a role in estrogen and testosterone signaling pathway at several levels. Mediates the use of alternative promoters in estrogen-responsive genes and regulates transcription and splicing of a large number of steroid hormone target genes. Contrary to the splicing regulation activity, transcriptional coregulation of the estrogen receptor ESR1 is helicase activity-independent. Plays a role in innate immunity. Specifically restricts bunyavirus infection, including Rift Valley fever virus (RVFV) or La Crosse virus (LACV), but not vesicular stomatitis virus (VSV), in an interferon- and DROSHA-independent manner. Binds to RVFV RNA, likely via structured viral RNA elements. Promotes mRNA degradation mediated by the antiviral zinc-finger protein ZC3HAV1, in an ATPase-dependent manner. The protein is Probable ATP-dependent RNA helicase DDX17 (Ddx17) of Mus musculus (Mouse).